A 112-amino-acid polypeptide reads, in one-letter code: uncharacterized protein (112 aa).

Coiled-coil stretches lie at residues 15 to 53 (AEKK…FFKF) and 86 to 103 (LDYE…TERK).

This is an uncharacterized protein from Aquifex aeolicus (strain VF5).